Here is a 529-residue protein sequence, read N- to C-terminus: Peptide chain release factor 3 (529 aa).

The 270-residue stretch at 11–280 (AKRRTFAIIS…GLVKWAPAPM (270 aa)) folds into the tr-type G domain. GTP contacts are provided by residues 20–27 (SHPDAGKT), 88–92 (DTPGH), and 142–145 (NKLD).

This sequence belongs to the TRAFAC class translation factor GTPase superfamily. Classic translation factor GTPase family. PrfC subfamily.

The protein resides in the cytoplasm. Its function is as follows. Increases the formation of ribosomal termination complexes and stimulates activities of RF-1 and RF-2. It binds guanine nucleotides and has strong preference for UGA stop codons. It may interact directly with the ribosome. The stimulation of RF-1 and RF-2 is significantly reduced by GTP and GDP, but not by GMP. The sequence is that of Peptide chain release factor 3 from Photorhabdus laumondii subsp. laumondii (strain DSM 15139 / CIP 105565 / TT01) (Photorhabdus luminescens subsp. laumondii).